Here is a 397-residue protein sequence, read N- to C-terminus: Enoyl-[acyl-carrier-protein] reductase [NADH] (397 aa).

Residues 48-53, 74-75, 111-112, and 139-140 contribute to the NAD(+) site; these read GASTGY, FE, DA, and VA. A substrate-binding site is contributed by Tyr225. Tyr235 (proton donor) is an active-site residue. Residues Lys244 and 273 to 275 each bind NAD(+); that span reads VVT.

This sequence belongs to the TER reductase family. In terms of assembly, monomer.

The enzyme catalyses a 2,3-saturated acyl-[ACP] + NAD(+) = a (2E)-enoyl-[ACP] + NADH + H(+). Its pathway is lipid metabolism; fatty acid biosynthesis. Involved in the final reduction of the elongation cycle of fatty acid synthesis (FAS II). Catalyzes the reduction of a carbon-carbon double bond in an enoyl moiety that is covalently linked to an acyl carrier protein (ACP). The polypeptide is Enoyl-[acyl-carrier-protein] reductase [NADH] (Burkholderia mallei (strain NCTC 10247)).